The following is a 217-amino-acid chain: Probable transaldolase (217 aa).

Lys83 acts as the Schiff-base intermediate with substrate in catalysis.

This sequence belongs to the transaldolase family. Type 3B subfamily.

It localises to the cytoplasm. It catalyses the reaction D-sedoheptulose 7-phosphate + D-glyceraldehyde 3-phosphate = D-erythrose 4-phosphate + beta-D-fructose 6-phosphate. Its pathway is carbohydrate degradation; pentose phosphate pathway; D-glyceraldehyde 3-phosphate and beta-D-fructose 6-phosphate from D-ribose 5-phosphate and D-xylulose 5-phosphate (non-oxidative stage): step 2/3. Functionally, transaldolase is important for the balance of metabolites in the pentose-phosphate pathway. The chain is Probable transaldolase from Bartonella tribocorum (strain CIP 105476 / IBS 506).